The primary structure comprises 500 residues: Cobyric acid synthase (500 aa).

Residues 255-444 (AIDIAVIRCP…MHDLFHNDAF (190 aa)) enclose the GATase cobBQ-type domain. Residue C337 is the Nucleophile of the active site. Residue H436 is part of the active site.

The protein belongs to the CobB/CobQ family. CobQ subfamily.

It participates in cofactor biosynthesis; adenosylcobalamin biosynthesis. Its function is as follows. Catalyzes amidations at positions B, D, E, and G on adenosylcobyrinic A,C-diamide. NH(2) groups are provided by glutamine, and one molecule of ATP is hydrogenolyzed for each amidation. In Geobacillus thermodenitrificans (strain NG80-2), this protein is Cobyric acid synthase.